A 627-amino-acid chain; its full sequence is Sister chromatid cohesion 1 protein 1 (627 aa).

Disordered regions lie at residues 211-294, 395-416, and 461-510; these read GDDE…TATS, MHNH…NLDS, and GDDV…VAEE. 3 stretches are compositionally biased toward basic and acidic residues: residues 254-263, 272-282, and 395-408; these read EQQENRRDGF, IPDKEEHDRPQ, and MHNH…ERSD. The segment covering 467-487 has biased composition (polar residues); sequence MPSTPSARGAASINNIEISSK.

This sequence belongs to the rad21 family. In terms of assembly, component of the cohesin complex. In terms of tissue distribution, isoform 2 is expressed at low levels in buds, leaves and roots, whereas expression of isoform 1 is confined to buds.

The protein resides in the nucleus. Its function is as follows. Involved in chromosome condensation, pairing and segregation during meiosis. Responsible for cohesion between replicated sister chromatids. In Arabidopsis thaliana (Mouse-ear cress), this protein is Sister chromatid cohesion 1 protein 1 (SYN1).